Consider the following 402-residue polypeptide: 3-isopropylmalate dehydratase large subunit 2 (402 aa).

Residues cysteine 280, cysteine 341, and cysteine 344 each coordinate [4Fe-4S] cluster.

The protein belongs to the aconitase/IPM isomerase family. LeuC type 2 subfamily. Heterodimer of LeuC and LeuD. The cofactor is [4Fe-4S] cluster.

It carries out the reaction (2R,3S)-3-isopropylmalate = (2S)-2-isopropylmalate. It participates in amino-acid biosynthesis; L-leucine biosynthesis; L-leucine from 3-methyl-2-oxobutanoate: step 2/4. Functionally, catalyzes the isomerization between 2-isopropylmalate and 3-isopropylmalate, via the formation of 2-isopropylmaleate. In Methanopyrus kandleri (strain AV19 / DSM 6324 / JCM 9639 / NBRC 100938), this protein is 3-isopropylmalate dehydratase large subunit 2.